The sequence spans 92 residues: MCSFEHGGWYVPKTVLSLLRRRKCQDARAESEELGITGICQNYAVPVQLGVQHYFGAHWGIDATATVSFGVDTKLAKFRIPYTLRVGPVFRT.

This is an uncharacterized protein from Treponema pallidum (strain Nichols).